The following is a 464-amino-acid chain: 3-isopropylmalate dehydratase large subunit (464 aa).

Positions 337, 397, and 400 each coordinate [4Fe-4S] cluster.

The protein belongs to the aconitase/IPM isomerase family. LeuC type 1 subfamily. As to quaternary structure, heterodimer of LeuC and LeuD. The cofactor is [4Fe-4S] cluster.

It catalyses the reaction (2R,3S)-3-isopropylmalate = (2S)-2-isopropylmalate. The protein operates within amino-acid biosynthesis; L-leucine biosynthesis; L-leucine from 3-methyl-2-oxobutanoate: step 2/4. Catalyzes the isomerization between 2-isopropylmalate and 3-isopropylmalate, via the formation of 2-isopropylmaleate. In Bacillus anthracis (strain A0248), this protein is 3-isopropylmalate dehydratase large subunit.